Reading from the N-terminus, the 245-residue chain is Ribosomal RNA large subunit methyltransferase E (245 aa).

Residues 1-26 (MTKPPVGSNRSGRKLGQKVKKGKLKA) form a disordered region. A compositionally biased stretch (basic residues) spans 11–26 (SGRKLGQKVKKGKLKA). S-adenosyl-L-methionine contacts are provided by glycine 81, tryptophan 83, aspartate 104, aspartate 120, and aspartate 144. The active-site Proton acceptor is the lysine 184.

This sequence belongs to the class I-like SAM-binding methyltransferase superfamily. RNA methyltransferase RlmE family.

The protein resides in the cytoplasm. It catalyses the reaction uridine(2552) in 23S rRNA + S-adenosyl-L-methionine = 2'-O-methyluridine(2552) in 23S rRNA + S-adenosyl-L-homocysteine + H(+). Its function is as follows. Specifically methylates the uridine in position 2552 of 23S rRNA at the 2'-O position of the ribose in the fully assembled 50S ribosomal subunit. The chain is Ribosomal RNA large subunit methyltransferase E from Sinorhizobium medicae (strain WSM419) (Ensifer medicae).